A 489-amino-acid polypeptide reads, in one-letter code: Amino acid transporter AVT6E (489 aa).

The next 11 membrane-spanning stretches (helical) occupy residues 76–96, 102–122, 156–176, 201–221, 227–247, 269–289, 310–330, 357–377, 404–424, 425–445, and 461–481; these read GIYG…IMAL, VLGL…SEIS, ICII…MGDV, VLIL…NKID, SAAS…VATI, ILDL…HFNV, ITTA…YLLF, IVRI…HFSL, VVLL…WTAF, KFTG…LIAL, and VSWL…IGNI.

Belongs to the amino acid/polyamine transporter 2 family. Amino acid/auxin permease (AAAP) (TC 2.A.18.6) subfamily.

The protein resides in the endoplasmic reticulum membrane. It localises to the vacuole membrane. The chain is Amino acid transporter AVT6E from Arabidopsis thaliana (Mouse-ear cress).